Consider the following 113-residue polypeptide: Immunoglobulin lambda variable 2-23 (113 aa).

Positions 1–19 are cleaved as a signal peptide; that stretch reads MAWALLLLTLLTQDTGSWA. Gln-20 carries the pyrrolidone carboxylic acid modification. The tract at residues 20–44 is framework-1; it reads QSALTQPASVSGSPGQSITISCTGT. The region spanning 20-113 is the Ig-like domain; sequence QSALTQPASV…EADYYCCSYA (94 aa). A disulfide bridge connects residues Cys-41 and Cys-109. Residues 45–53 are complementarity-determining-1; sequence SSDVGSYNL. The interval 54 to 70 is framework-2; sequence VSWYQQHPGKAPKLMIY. Residues 71-73 form a complementarity-determining-2 region; sequence EGS. The segment at 73-92 is disordered; the sequence is SKRPSGVSNRFSGSKSGNTA. Residues 74 to 109 are framework-3; the sequence is KRPSGVSNRFSGSKSGNTASLTISGLQAEDEADYYC. The segment covering 78–92 has biased composition (polar residues); that stretch reads GVSNRFSGSKSGNTA. The interval 110–113 is complementarity-determining-3; the sequence is CSYA.

In terms of assembly, immunoglobulins are composed of two identical heavy chains and two identical light chains; disulfide-linked.

Its subcellular location is the secreted. The protein localises to the cell membrane. Functionally, v region of the variable domain of immunoglobulin light chains that participates in the antigen recognition. Immunoglobulins, also known as antibodies, are membrane-bound or secreted glycoproteins produced by B lymphocytes. In the recognition phase of humoral immunity, the membrane-bound immunoglobulins serve as receptors which, upon binding of a specific antigen, trigger the clonal expansion and differentiation of B lymphocytes into immunoglobulins-secreting plasma cells. Secreted immunoglobulins mediate the effector phase of humoral immunity, which results in the elimination of bound antigens. The antigen binding site is formed by the variable domain of one heavy chain, together with that of its associated light chain. Thus, each immunoglobulin has two antigen binding sites with remarkable affinity for a particular antigen. The variable domains are assembled by a process called V-(D)-J rearrangement and can then be subjected to somatic hypermutations which, after exposure to antigen and selection, allow affinity maturation for a particular antigen. This is Immunoglobulin lambda variable 2-23 from Homo sapiens (Human).